We begin with the raw amino-acid sequence, 725 residues long: Fatty acid oxidation complex subunit alpha (725 aa).

The segment at 1 to 189 (MIYQGENLSV…ALGMIDGVVS (189 aa)) is enoyl-CoA hydratase/isomerase. Asp-296 serves as a coordination point for substrate. The segment at 311 to 725 (EPVTSAAVLG…APQSLSAPSA (415 aa)) is 3-hydroxyacyl-CoA dehydrogenase. NAD(+) contacts are provided by residues Met-324, Asp-343, 400–402 (VVE), Lys-407, and Ser-429. His-450 functions as the For 3-hydroxyacyl-CoA dehydrogenase activity in the catalytic mechanism. Asn-453 contributes to the NAD(+) binding site. Substrate is bound by residues Asn-500 and Tyr-660.

It in the N-terminal section; belongs to the enoyl-CoA hydratase/isomerase family. This sequence in the C-terminal section; belongs to the 3-hydroxyacyl-CoA dehydrogenase family. Heterotetramer of two alpha chains (FadB) and two beta chains (FadA).

The enzyme catalyses a (3S)-3-hydroxyacyl-CoA + NAD(+) = a 3-oxoacyl-CoA + NADH + H(+). It carries out the reaction a (3S)-3-hydroxyacyl-CoA = a (2E)-enoyl-CoA + H2O. The catalysed reaction is a 4-saturated-(3S)-3-hydroxyacyl-CoA = a (3E)-enoyl-CoA + H2O. It catalyses the reaction (3S)-3-hydroxybutanoyl-CoA = (3R)-3-hydroxybutanoyl-CoA. The enzyme catalyses a (3Z)-enoyl-CoA = a 4-saturated (2E)-enoyl-CoA. It carries out the reaction a (3E)-enoyl-CoA = a 4-saturated (2E)-enoyl-CoA. The protein operates within lipid metabolism; fatty acid beta-oxidation. In terms of biological role, involved in the aerobic and anaerobic degradation of long-chain fatty acids via beta-oxidation cycle. Catalyzes the formation of 3-oxoacyl-CoA from enoyl-CoA via L-3-hydroxyacyl-CoA. It can also use D-3-hydroxyacyl-CoA and cis-3-enoyl-CoA as substrate. This Aliivibrio fischeri (strain MJ11) (Vibrio fischeri) protein is Fatty acid oxidation complex subunit alpha.